The sequence spans 282 residues: tRNA pseudouridine synthase A (282 aa).

D53 functions as the Nucleophile in the catalytic mechanism. Y119 is a binding site for substrate.

It belongs to the tRNA pseudouridine synthase TruA family. Homodimer.

The catalysed reaction is uridine(38/39/40) in tRNA = pseudouridine(38/39/40) in tRNA. Functionally, formation of pseudouridine at positions 38, 39 and 40 in the anticodon stem and loop of transfer RNAs. The sequence is that of tRNA pseudouridine synthase A from Corynebacterium efficiens (strain DSM 44549 / YS-314 / AJ 12310 / JCM 11189 / NBRC 100395).